A 634-amino-acid polypeptide reads, in one-letter code: 1-deoxy-D-xylulose-5-phosphate synthase (634 aa).

Thiamine diphosphate-binding positions include H77 and 118–120 (GHA). D149 contributes to the Mg(2+) binding site. Thiamine diphosphate is bound by residues 150-151 (AS), N178, Y289, and E371. A Mg(2+)-binding site is contributed by N178.

The protein belongs to the transketolase family. DXPS subfamily. As to quaternary structure, homodimer. Mg(2+) serves as cofactor. It depends on thiamine diphosphate as a cofactor.

The enzyme catalyses D-glyceraldehyde 3-phosphate + pyruvate + H(+) = 1-deoxy-D-xylulose 5-phosphate + CO2. It functions in the pathway metabolic intermediate biosynthesis; 1-deoxy-D-xylulose 5-phosphate biosynthesis; 1-deoxy-D-xylulose 5-phosphate from D-glyceraldehyde 3-phosphate and pyruvate: step 1/1. In terms of biological role, catalyzes the acyloin condensation reaction between C atoms 2 and 3 of pyruvate and glyceraldehyde 3-phosphate to yield 1-deoxy-D-xylulose-5-phosphate (DXP). This Leptospira interrogans serogroup Icterohaemorrhagiae serovar copenhageni (strain Fiocruz L1-130) protein is 1-deoxy-D-xylulose-5-phosphate synthase.